The sequence spans 157 residues: 2-C-methyl-D-erythritol 2,4-cyclodiphosphate synthase (157 aa).

A divalent metal cation contacts are provided by D9 and H11. 4-CDP-2-C-methyl-D-erythritol 2-phosphate contacts are provided by residues 9 to 11 and 35 to 36; these read DVH and HS. H43 contributes to the a divalent metal cation binding site. 4-CDP-2-C-methyl-D-erythritol 2-phosphate contacts are provided by residues 57–59, 62–66, 101–107, 133–136, F140, and R143; these read DIG, FPDTD, AQKPKMA, and TTTE.

It belongs to the IspF family. As to quaternary structure, homotrimer. A divalent metal cation serves as cofactor.

The enzyme catalyses 4-CDP-2-C-methyl-D-erythritol 2-phosphate = 2-C-methyl-D-erythritol 2,4-cyclic diphosphate + CMP. Its pathway is isoprenoid biosynthesis; isopentenyl diphosphate biosynthesis via DXP pathway; isopentenyl diphosphate from 1-deoxy-D-xylulose 5-phosphate: step 4/6. Its function is as follows. Involved in the biosynthesis of isopentenyl diphosphate (IPP) and dimethylallyl diphosphate (DMAPP), two major building blocks of isoprenoid compounds. Catalyzes the conversion of 4-diphosphocytidyl-2-C-methyl-D-erythritol 2-phosphate (CDP-ME2P) to 2-C-methyl-D-erythritol 2,4-cyclodiphosphate (ME-CPP) with a corresponding release of cytidine 5-monophosphate (CMP). The polypeptide is 2-C-methyl-D-erythritol 2,4-cyclodiphosphate synthase (Halalkalibacterium halodurans (strain ATCC BAA-125 / DSM 18197 / FERM 7344 / JCM 9153 / C-125) (Bacillus halodurans)).